Consider the following 226-residue polypeptide: MDILISSLKSLGYSRTSKSLDSGPLVVHAVAGAGKSTALRKLILRHPTFTVHTLGVPDKVSIRTRGIQKPGPIPEGNFAILDEYTLDNTTRNSYQALFADPYQAPEFSLEPHFYLETSFRVPRKVADLIAGCGFDFETNSQEEGHLEITGIFKGPLLGKVIAIDEESETTLSRHGVEFVKPCQVTGLELKVVTIVSAAPIEEIGQSTAFYNAITRSKGLTYVRAGT.

The (+)RNA virus helicase ATP-binding domain maps to 1-115; it reads MDILISSLKS…EFSLEPHFYL (115 aa). In terms of domain architecture, (+)RNA virus helicase C-terminal spans 116-226; it reads ETSFRVPRKV…KGLTYVRAGT (111 aa).

The protein belongs to the Tymovirales TGBp1 protein family. As to quaternary structure, homodimer and homooligomer. Interacts with capsid protein. Interacts with host AGO1; this interaction targets the host protein for degradation, thereby suppressing the antiviral RNA silencing.

It is found in the host cytoplasm. Functionally, transports viral genome to neighboring plant cells directly through plasmosdesmata, without any budding. The movement protein allows efficient cell to cell propagation, by bypassing the host cell wall barrier. Increases plasmodesma size exclusion limit. Acts as a suppressor of RNA-mediated gene silencing, also known as post-transcriptional gene silencing (PTGS), a mechanism of plant viral defense that limits the accumulation of viral RNAs. In Potato virus X (strain X3) (PVX), this protein is Movement and silencing protein TGBp1.